The chain runs to 471 residues: 3-isopropylmalate dehydratase large subunit (471 aa).

Positions 347, 407, and 410 each coordinate [4Fe-4S] cluster. The interval 417 to 443 is disordered; sequence TLQPGERSASTSNRNFEGRQGKGGRTH.

This sequence belongs to the aconitase/IPM isomerase family. LeuC type 1 subfamily. Heterodimer of LeuC and LeuD. [4Fe-4S] cluster is required as a cofactor.

It carries out the reaction (2R,3S)-3-isopropylmalate = (2S)-2-isopropylmalate. It functions in the pathway amino-acid biosynthesis; L-leucine biosynthesis; L-leucine from 3-methyl-2-oxobutanoate: step 2/4. Its function is as follows. Catalyzes the isomerization between 2-isopropylmalate and 3-isopropylmalate, via the formation of 2-isopropylmaleate. This chain is 3-isopropylmalate dehydratase large subunit, found in Nocardioides sp. (strain ATCC BAA-499 / JS614).